Consider the following 554-residue polypeptide: Intraflagellar transport protein 56 (554 aa).

The segment at 1–27 is disordered; that stretch reads MMLSRAKPAVGGESPHTDKRKKKGRKI. Residues 18-27 are compositionally biased toward basic residues; it reads DKRKKKGRKI. 4 TPR repeats span residues 57–90, 92–125, 151–184, and 468–501; these read DDTN…ENCN, EVWV…LQNR, KEDQ…NREY, and ANDC…EGKR.

It belongs to the IFT56 family. Component of the IFT complex B. Interacts with IFT46; the interaction is direct. As to expression, high expression detected in testis. Detected also retina, kidney, lung and brain tissue. The expression level is low in spleen. Expressed in the developing liver. Present in the airway epithelial cells and the testes (at protein level).

The protein resides in the cell projection. It localises to the cilium. In terms of biological role, component of the intraflagellar transport (IFT) complex B required for transport of proteins in the motile cilium. Required for transport of specific ciliary cargo proteins related to motility, while it is neither required for IFT complex B assembly or motion nor for cilium assembly. Required for efficient coupling between the accumulation of GLI2 and GLI3 at the ciliary tips and their dissociation from the negative regulator SUFU. Plays a key role in maintaining the integrity of the IFT complex B and the proper ciliary localization of the IFT complex B components. Not required for IFT complex A ciliary localization or function. Essential for maintaining proper microtubule organization within the ciliary axoneme. The chain is Intraflagellar transport protein 56 from Mus musculus (Mouse).